Consider the following 178-residue polypeptide: CDP-archaeol synthase (178 aa).

Helical transmembrane passes span 3 to 23, 56 to 76, 87 to 107, 123 to 145, and 150 to 169; these read LLLL…ANAV, FFGI…VILY, LFGY…GDML, APIL…FYPL, and IVLL…IIAY.

This sequence belongs to the CDP-archaeol synthase family. Mg(2+) is required as a cofactor.

The protein resides in the cell membrane. It carries out the reaction 2,3-bis-O-(geranylgeranyl)-sn-glycerol 1-phosphate + CTP + H(+) = CDP-2,3-bis-O-(geranylgeranyl)-sn-glycerol + diphosphate. Its pathway is membrane lipid metabolism; glycerophospholipid metabolism. Catalyzes the formation of CDP-2,3-bis-(O-geranylgeranyl)-sn-glycerol (CDP-archaeol) from 2,3-bis-(O-geranylgeranyl)-sn-glycerol 1-phosphate (DGGGP) and CTP. This reaction is the third ether-bond-formation step in the biosynthesis of archaeal membrane lipids. The sequence is that of CDP-archaeol synthase from Methanococcus maripaludis (strain C6 / ATCC BAA-1332).